Consider the following 498-residue polypeptide: Cobyric acid synthase (498 aa).

The 191-residue stretch at 257-447 (DLEIAVLRLP…LHGLLDNGPW (191 aa)) folds into the GATase cobBQ-type domain. Cys338 acts as the Nucleophile in catalysis. His439 is an active-site residue.

The protein belongs to the CobB/CobQ family. CobQ subfamily.

Its pathway is cofactor biosynthesis; adenosylcobalamin biosynthesis. Its function is as follows. Catalyzes amidations at positions B, D, E, and G on adenosylcobyrinic A,C-diamide. NH(2) groups are provided by glutamine, and one molecule of ATP is hydrogenolyzed for each amidation. The protein is Cobyric acid synthase of Synechococcus sp. (strain CC9605).